Here is a 156-residue protein sequence, read N- to C-terminus: Small ribosomal subunit protein uS7 (156 aa).

It belongs to the universal ribosomal protein uS7 family. As to quaternary structure, part of the 30S ribosomal subunit. Contacts proteins S9 and S11.

In terms of biological role, one of the primary rRNA binding proteins, it binds directly to 16S rRNA where it nucleates assembly of the head domain of the 30S subunit. Is located at the subunit interface close to the decoding center, probably blocks exit of the E-site tRNA. This chain is Small ribosomal subunit protein uS7, found in Hamiltonella defensa subsp. Acyrthosiphon pisum (strain 5AT).